Consider the following 181-residue polypeptide: Adenine phosphoribosyltransferase (181 aa).

This sequence belongs to the purine/pyrimidine phosphoribosyltransferase family. In terms of assembly, homodimer.

Its subcellular location is the cytoplasm. The catalysed reaction is AMP + diphosphate = 5-phospho-alpha-D-ribose 1-diphosphate + adenine. Its pathway is purine metabolism; AMP biosynthesis via salvage pathway; AMP from adenine: step 1/1. Its function is as follows. Catalyzes a salvage reaction resulting in the formation of AMP, that is energically less costly than de novo synthesis. The polypeptide is Adenine phosphoribosyltransferase (Shewanella amazonensis (strain ATCC BAA-1098 / SB2B)).